We begin with the raw amino-acid sequence, 1494 residues long: Neuropathy target esterase sws (1494 aa).

Residues 1–35 lie on the Lumenal side of the membrane; the sequence is MDVLELLRVSGSNMYYSTFLADAWCYYISNQITMT. Residues 36–56 traverse the membrane as a helical segment; the sequence is MYLYCALGVLSMLFIGWFVYF. The Cytoplasmic portion of the chain corresponds to 57–1494; it reads KRLARLRLRH…NTNNETKNYL (1438 aa). 176–303 is a binding site for a nucleoside 3',5'-cyclic phosphate; that stretch reads IFGHFEKPIF…IRVIQVIMIR (128 aa). Low complexity predominate over residues 362–372; sequence ASGTAGSTHTA. Disordered stretches follow at residues 362 to 405 and 422 to 452; these read ASGT…ELSG and NSYPPLYHQRESDGNLSTRRGSITQQEQPEV. The segment covering 435–449 has biased composition (polar residues); that stretch reads GNLSTRRGSITQQEQ. Position 443 is a phosphoserine (serine 443). Residues 474 to 601 and 590 to 717 each bind a nucleoside 3',5'-cyclic phosphate; these read ELGL…VVRR and IVLD…LSHR. A PNPLA domain is found at 944 to 1110; sequence LVLGGGGARG…VNNLPGHLWR (167 aa). The GXGXXG motif lies at 948–953; sequence GGGARG. Positions 975-979 match the GXSXG motif; it reads GVSIG. Serine 977 acts as the Nucleophile in catalysis. Residue aspartate 1097 is the Proton acceptor of the active site. A DGA/G motif is present at residues 1097 to 1099; sequence DGG. The tract at residues 1367 to 1494 is disordered; the sequence is MDKATQSTPP…NTNNETKNYL (128 aa). Polar residues predominate over residues 1370-1381; the sequence is ATQSTPPLQSKA. 2 stretches are compositionally biased toward basic and acidic residues: residues 1389–1420 and 1452–1483; these read SKEEARHEWEIKREQKQELAREQELERERELS and MDKKKTKDNDRDEVRGSAEDKGKEKEEDKENR. Residues 1484-1494 show a composition bias toward polar residues; sequence SNTNNETKNYL.

This sequence belongs to the NTE family. Interacts with Pka-C3; interaction inhibits the catalytic function of Pka-C3 and the esterase activity of sws.

Its subcellular location is the endoplasmic reticulum membrane. It catalyses the reaction a 1-acyl-sn-glycero-3-phosphocholine + H2O = sn-glycerol 3-phosphocholine + a fatty acid + H(+). Functionally, phospholipase B that deacylates intracellular phosphatidylcholine (PtdCho), generating glycerophosphocholine (GroPtdCho). This deacylation occurs at both sn-2 and sn-1 positions of PtdCho. Its specific chemical modification by certain organophosphorus (OP) compounds leads to distal axonopathy. Plays a role in the signaling mechanism between neurons and glia that regulates glia wrapping during development of the adult brain. Essential for membrane lipid homeostasis and cell survival in both neurons and glia of the adult brain. In Drosophila pseudoobscura pseudoobscura (Fruit fly), this protein is Neuropathy target esterase sws.